Reading from the N-terminus, the 88-residue chain is Small ribosomal subunit protein bS16c (88 aa).

This sequence belongs to the bacterial ribosomal protein bS16 family.

The protein resides in the plastid. It localises to the chloroplast. In Solanum bulbocastanum (Wild potato), this protein is Small ribosomal subunit protein bS16c.